We begin with the raw amino-acid sequence, 516 residues long: MDKDNQALDELPMLTGSKHANKRLFAAFMIFGLLNNVLYVIILSAALDLVSADTPKGVVALFNIFPALITKVVWPLLSNGKIRYTRRVGFCTICSWFGIITIALSSSLSPRLLGISLASLSSGMGELTFLQLTTTLPTEATSKTALGAWSSGTGFAGVAGAGIWWLLRGLGVKGGLGLSSFLPLFFPITYKYILPPFSHLEASSDSSPYQRLPMSSSLSNNNNFRPPAILISVPSSEYVPQHTPLLSSGFIDRDRDRNRDGEELTDGDKRLMGMRASRLTTQEKMKLLRPLVVRYMLPLCAVYVEEYVINSGVAPTLVFPLPTYGLWSWLFKSPRDYYPFWSLTYQTFVFLSRSSLSLGLPPIPKRLLPLPAIIQFLVLSLLFLQAKTFFFSSPAYTPPADGDGGVDRSITIVFLLICLEGLCGGSGYVNTFYHVGREGSVSENYDADGDNEMGGDRRTVNVTEMEKKAMEREFRIGAVGAADSTGILFASLISMPLEIALCRSQVDQGRTMCREL.

8 helical membrane passes run 24–44, 57–77, 88–108, 112–132, 146–166, 169–189, 371–391, and 409–429; these read LFAA…IILS, GVVA…WPLL, VGFC…SSSL, LLGI…FLQL, LGAW…IWWL, GLGV…FPIT, PAII…TFFF, and SITI…SGYV.

It belongs to the battenin family.

The protein resides in the vacuole membrane. Functionally, involved in vacuolar transport and vacuole pH homeostasis. Also required for cytokinesis. This Cryptococcus neoformans var. neoformans serotype D (strain JEC21 / ATCC MYA-565) (Filobasidiella neoformans) protein is Protein BTN1 (BTN1).